Reading from the N-terminus, the 712-residue chain is Phosphoribosylformylglycinamidine synthase subunit PurL (712 aa).

H32 is a catalytic residue. Residue Y35 coordinates ATP. E76 contributes to the Mg(2+) binding site. Residues 77–80 (SHNH) and R99 each bind substrate. The Proton acceptor role is filled by H78. Residue D100 participates in Mg(2+) binding. Position 223 (Q223) interacts with substrate. D251 serves as a coordination point for Mg(2+). 295-297 (ESQ) serves as a coordination point for substrate. ATP is bound by residues D470 and G507. N508 is a Mg(2+) binding site. S510 contacts substrate.

The protein belongs to the FGAMS family. As to quaternary structure, monomer. Part of the FGAM synthase complex composed of 1 PurL, 1 PurQ and 2 PurS subunits.

It localises to the cytoplasm. The enzyme catalyses N(2)-formyl-N(1)-(5-phospho-beta-D-ribosyl)glycinamide + L-glutamine + ATP + H2O = 2-formamido-N(1)-(5-O-phospho-beta-D-ribosyl)acetamidine + L-glutamate + ADP + phosphate + H(+). Its pathway is purine metabolism; IMP biosynthesis via de novo pathway; 5-amino-1-(5-phospho-D-ribosyl)imidazole from N(2)-formyl-N(1)-(5-phospho-D-ribosyl)glycinamide: step 1/2. Part of the phosphoribosylformylglycinamidine synthase complex involved in the purines biosynthetic pathway. Catalyzes the ATP-dependent conversion of formylglycinamide ribonucleotide (FGAR) and glutamine to yield formylglycinamidine ribonucleotide (FGAM) and glutamate. The FGAM synthase complex is composed of three subunits. PurQ produces an ammonia molecule by converting glutamine to glutamate. PurL transfers the ammonia molecule to FGAR to form FGAM in an ATP-dependent manner. PurS interacts with PurQ and PurL and is thought to assist in the transfer of the ammonia molecule from PurQ to PurL. This chain is Phosphoribosylformylglycinamidine synthase subunit PurL, found in Thermococcus gammatolerans (strain DSM 15229 / JCM 11827 / EJ3).